Reading from the N-terminus, the 480-residue chain is uncharacterized protein (480 aa).

A DNA-binding region (zn(2)-C6 fungal-type) is located at residues 16 to 46 (CDRCRRRKIRCTGSDIPGQPCLACQKAHADC). The span at 298–307 (SFGASVSPKS) shows a compositional bias: low complexity. The segment at 298–325 (SFGASVSPKSTPGSNSTGAAVDTNSVHS) is disordered. Residues 308–325 (TPGSNSTGAAVDTNSVHS) are compositionally biased toward polar residues.

The protein localises to the cytoplasm. It localises to the nucleus. This is an uncharacterized protein from Schizosaccharomyces pombe (strain 972 / ATCC 24843) (Fission yeast).